The primary structure comprises 221 residues: GTPase Obg (221 aa).

One can recognise an OBG-type G domain in the interval 1 to 61 (PSALRLVLLN…LKYKLLEIVQ (61 aa)). GTP-binding positions include 10 to 13 (NKAD) and 42 to 44 (SAV). An OCT domain is found at 82–162 (VVHRTKGQFQ…IGGISFEWEP (81 aa)).

It belongs to the TRAFAC class OBG-HflX-like GTPase superfamily. OBG GTPase family. In terms of assembly, monomer. Mg(2+) serves as cofactor.

The protein localises to the cytoplasm. An essential GTPase which binds GTP, GDP and possibly (p)ppGpp with moderate affinity, with high nucleotide exchange rates and a fairly low GTP hydrolysis rate. Plays a role in control of the cell cycle, stress response, ribosome biogenesis and in those bacteria that undergo differentiation, in morphogenesis control. This Corynebacterium melassecola protein is GTPase Obg.